The sequence spans 330 residues: uncharacterized protein (330 aa).

The protein to H.influenzae HI_0461.

This is an uncharacterized protein from Escherichia coli (strain K12).